Here is a 355-residue protein sequence, read N- to C-terminus: Protein RecA (355 aa).

Residue 72 to 79 (GPESSGKT) participates in ATP binding.

This sequence belongs to the RecA family.

It is found in the cytoplasm. Functionally, can catalyze the hydrolysis of ATP in the presence of single-stranded DNA, the ATP-dependent uptake of single-stranded DNA by duplex DNA, and the ATP-dependent hybridization of homologous single-stranded DNAs. It interacts with LexA causing its activation and leading to its autocatalytic cleavage. The protein is Protein RecA of Wolbachia sp. subsp. Brugia malayi (strain TRS).